Here is a 116-residue protein sequence, read N- to C-terminus: MSMDNLVRLVEKDQYKQLPDFRPGDTVKVHVKIVEGGKERIQIFEGIVIKIRGSGLGKTFTVRKIASGGIGVERTFPYHSPVVQKIEIVKKAVTRRAKLYYIRDIRGKIRLKERKE.

This sequence belongs to the bacterial ribosomal protein bL19 family.

Its function is as follows. This protein is located at the 30S-50S ribosomal subunit interface and may play a role in the structure and function of the aminoacyl-tRNA binding site. The polypeptide is Large ribosomal subunit protein bL19 (Pseudothermotoga lettingae (strain ATCC BAA-301 / DSM 14385 / NBRC 107922 / TMO) (Thermotoga lettingae)).